We begin with the raw amino-acid sequence, 287 residues long: Ribosomal RNA small subunit methyltransferase I (287 aa).

This sequence belongs to the methyltransferase superfamily. RsmI family.

The protein localises to the cytoplasm. The enzyme catalyses cytidine(1402) in 16S rRNA + S-adenosyl-L-methionine = 2'-O-methylcytidine(1402) in 16S rRNA + S-adenosyl-L-homocysteine + H(+). Its function is as follows. Catalyzes the 2'-O-methylation of the ribose of cytidine 1402 (C1402) in 16S rRNA. In Streptococcus pyogenes serotype M1, this protein is Ribosomal RNA small subunit methyltransferase I.